Here is a 449-residue protein sequence, read N- to C-terminus: tRNA-2-methylthio-N(6)-dimethylallyladenosine synthase (449 aa).

The MTTase N-terminal domain maps to Asp7–Gln124. 6 residues coordinate [4Fe-4S] cluster: Cys16, Cys52, Cys87, Cys163, Cys167, and Cys170. In terms of domain architecture, Radical SAM core spans Arg149–Ser379. The TRAM domain maps to Ser382–Ile445.

It belongs to the methylthiotransferase family. MiaB subfamily. Monomer. Requires [4Fe-4S] cluster as cofactor.

Its subcellular location is the cytoplasm. The enzyme catalyses N(6)-dimethylallyladenosine(37) in tRNA + (sulfur carrier)-SH + AH2 + 2 S-adenosyl-L-methionine = 2-methylsulfanyl-N(6)-dimethylallyladenosine(37) in tRNA + (sulfur carrier)-H + 5'-deoxyadenosine + L-methionine + A + S-adenosyl-L-homocysteine + 2 H(+). In terms of biological role, catalyzes the methylthiolation of N6-(dimethylallyl)adenosine (i(6)A), leading to the formation of 2-methylthio-N6-(dimethylallyl)adenosine (ms(2)i(6)A) at position 37 in tRNAs that read codons beginning with uridine. The sequence is that of tRNA-2-methylthio-N(6)-dimethylallyladenosine synthase from Chlorobium chlorochromatii (strain CaD3).